Consider the following 645-residue polypeptide: Heat shock protein SSA2 (645 aa).

At Ser-2 the chain carries N-acetylserine. The tract at residues 581-645 (ANQTATQEEF…NDGPTVEEVD (65 aa)) is disordered. Low complexity predominate over residues 611–621 (AGATPSGAAGA).

The protein belongs to the heat shock protein 70 family. Binds human histatin-5, an antifungal peptide from saliva.

It is found in the cytoplasm. The protein resides in the secreted. It localises to the cell wall. In terms of biological role, heat shock protein that may play a role in the transport of polypeptides both across the mitochondrial membranes and into the endoplasmic reticulum. Its function is as follows. Acts as a highly immunodominant antigen. Plays a role in the sensitivity to, and the import of candidacidal beta-defensin peptides. HSP70/SSA1 and SSA2 bind histatin-5, a peptide from human saliva, and mediates its fungicidal activity. SSA2 facilitates fungicidal activity of Hst 5 in binding and intracellular translocation, whereas HSP70/SSA1 appears to have a lesser functional role in Hst 5 toxicity. This Candida albicans (strain SC5314 / ATCC MYA-2876) (Yeast) protein is Heat shock protein SSA2.